The chain runs to 1097 residues: DNA polymerase catalytic subunit (1097 aa).

The segment at 1069–1097 (RGGDDSDGGDSEKENMDTERSSSHEAMET) is disordered. A compositionally biased stretch (basic and acidic residues) spans 1078-1097 (DSEKENMDTERSSSHEAMET).

This sequence belongs to the DNA polymerase type-B family.

The protein resides in the host nucleus. It catalyses the reaction DNA(n) + a 2'-deoxyribonucleoside 5'-triphosphate = DNA(n+1) + diphosphate. This is DNA polymerase catalytic subunit (UL54) from Murid herpesvirus 1 (strain Smith) (MuHV-1).